The sequence spans 408 residues: Cytochrome bc1 complex Rieske iron-sulfur subunit (408 aa).

A run of 3 helical transmembrane segments spans residues 56–76, 98–118, and 166–186; these read VGIW…TYIF, MLGI…VLYV, and LLAG…GGMI. The Rieske domain maps to 293 to 390; the sequence is HGPRNAVMLI…ITVDEEGYLI (98 aa). Residues cysteine 333, histidine 335, cysteine 352, and histidine 355 each coordinate [2Fe-2S] cluster. Cysteine 338 and cysteine 354 are joined by a disulfide.

Belongs to the Rieske iron-sulfur protein family. In terms of assembly, the cytochrome bc1 complex is composed of a cytochrome b (QcrB), the Rieske iron-sulfur protein (QcrA) and a diheme cytochrome c (QcrC) subunit. The bc1 complex forms a supercomplex with cytochrome c oxidase (cytochrome aa3). [2Fe-2S] cluster serves as cofactor.

Its subcellular location is the cell membrane. In terms of biological role, iron-sulfur subunit of the cytochrome bc1 complex, an essential component of the respiratory electron transport chain required for ATP synthesis. The bc1 complex catalyzes the oxidation of menaquinol and the reduction of cytochrome c in the respiratory chain. The bc1 complex operates through a Q-cycle mechanism that couples electron transfer to generation of the proton gradient that drives ATP synthesis. The protein is Cytochrome bc1 complex Rieske iron-sulfur subunit (qcrA) of Corynebacterium efficiens (strain DSM 44549 / YS-314 / AJ 12310 / JCM 11189 / NBRC 100395).